Consider the following 784-residue polypeptide: Endonuclease MutS2 (784 aa).

335–342 (GPNTGGKT) contributes to the ATP binding site. The Smr domain occupies 709–784 (LDLRGERYED…GTGVTIVELK (76 aa)).

Belongs to the DNA mismatch repair MutS family. MutS2 subfamily. As to quaternary structure, homodimer. Binds to stalled ribosomes, contacting rRNA.

In terms of biological role, endonuclease that is involved in the suppression of homologous recombination and thus may have a key role in the control of bacterial genetic diversity. Acts as a ribosome collision sensor, splitting the ribosome into its 2 subunits. Detects stalled/collided 70S ribosomes which it binds and splits by an ATP-hydrolysis driven conformational change. Acts upstream of the ribosome quality control system (RQC), a ribosome-associated complex that mediates the extraction of incompletely synthesized nascent chains from stalled ribosomes and their subsequent degradation. Probably generates substrates for RQC. This Geobacillus sp. (strain WCH70) protein is Endonuclease MutS2.